A 234-amino-acid chain; its full sequence is UPF0173 metal-dependent hydrolase RHE_CH01853 (234 aa).

This sequence belongs to the UPF0173 family.

This Rhizobium etli (strain ATCC 51251 / DSM 11541 / JCM 21823 / NBRC 15573 / CFN 42) protein is UPF0173 metal-dependent hydrolase RHE_CH01853.